The primary structure comprises 314 residues: Solute carrier family 25 member 44 (314 aa).

3 Solcar repeats span residues 18–100 (KKFY…TRKF), 107–210 (SNTV…YAEQ), and 220–302 (PHIV…LKKL). 6 helical membrane passes run 20–42 (FYVF…TLIR), 71–90 (TGLY…GQCY), 113–133 (LVAG…IDVV), 185–201 (GYVA…AVWW), 222–239 (IVFQ…ASIL), and 278–296 (LSAR…VVGY).

The protein belongs to the mitochondrial carrier (TC 2.A.29) family.

The protein resides in the mitochondrion membrane. The enzyme catalyses L-valine(in) = L-valine(out). It catalyses the reaction L-leucine(in) = L-leucine(out). Its function is as follows. Mitochondrial solute transporter which transports branched-chain amino acid (BCAA; valine, leucine and isoleucine) into mitochondria in brown adipose tissue (BAT). BAT is involved in BCAA catabolism and actively utilizes BCAA in the mitochondria for thermogenesis. The polypeptide is Solute carrier family 25 member 44 (Homo sapiens (Human)).